Consider the following 364-residue polypeptide: Mannose-1-phosphate guanyltransferase (364 aa).

The protein belongs to the transferase hexapeptide repeat family.

It is found in the cytoplasm. It catalyses the reaction alpha-D-mannose 1-phosphate + GTP + H(+) = GDP-alpha-D-mannose + diphosphate. Its pathway is nucleotide-sugar biosynthesis; GDP-alpha-D-mannose biosynthesis; GDP-alpha-D-mannose from alpha-D-mannose 1-phosphate (GTP route): step 1/1. Its function is as follows. Involved in cell wall synthesis where it is required for glycosylation. Involved in cell cycle progression through cell-size checkpoint. The sequence is that of Mannose-1-phosphate guanyltransferase (mpg1) from Aspergillus fumigatus (strain ATCC MYA-4609 / CBS 101355 / FGSC A1100 / Af293) (Neosartorya fumigata).